The sequence spans 218 residues: Adenylate kinase (218 aa).

14–19 (GAGKGT) is an ATP binding site. The tract at residues 34–63 (STGDMFRAAIKAGTELGKQAKALMDEGKLV) is NMP. Residues T35, R40, 61–63 (KLV), 89–92 (GFPR), and Q96 each bind AMP. The LID stretch occupies residues 126–163 (GRRVHQASGRSYHIVYNPPKVEGKDDVTGEDLIIRADD). ATP contacts are provided by residues R127 and 136-137 (SY). Residues R160 and R171 each contribute to the AMP site. Residue K204 coordinates ATP.

The protein belongs to the adenylate kinase family. In terms of assembly, monomer.

Its subcellular location is the cytoplasm. It carries out the reaction AMP + ATP = 2 ADP. The protein operates within purine metabolism; AMP biosynthesis via salvage pathway; AMP from ADP: step 1/1. Its function is as follows. Catalyzes the reversible transfer of the terminal phosphate group between ATP and AMP. Plays an important role in cellular energy homeostasis and in adenine nucleotide metabolism. The polypeptide is Adenylate kinase (Mannheimia succiniciproducens (strain KCTC 0769BP / MBEL55E)).